The following is a 66-amino-acid chain: Ribosome biogenesis protein Nop10 (66 aa).

Belongs to the NOP10 family.

In terms of biological role, involved in ribosome biogenesis; more specifically in 18S rRNA pseudouridylation and in cleavage of pre-rRNA. This Staphylothermus marinus (strain ATCC 43588 / DSM 3639 / JCM 9404 / F1) protein is Ribosome biogenesis protein Nop10.